Reading from the N-terminus, the 484-residue chain is Zinc metalloproteinase-disintegrin stejnitin (484 aa).

The N-terminal stretch at 1-20 (MIQVLLVTICLAVFPYQGNS) is a signal peptide. Positions 21 to 192 (IILESGNVND…ASQLNLTPDE (172 aa)) are excised as a propeptide. Gln-193 is modified (pyrrolidone carboxylic acid). A Peptidase M12B domain is found at 194 to 392 (RFIELVIVAD…YTSRCLYNGP (199 aa)). Glu-197 serves as a coordination point for Ca(2+). N-linked (GlcNAc...) asparagine glycosylation is present at Asn-254. Asp-281 provides a ligand contact to Ca(2+). 3 disulfides stabilise this stretch: Cys-305-Cys-387, Cys-345-Cys-369, and Cys-347-Cys-352. Zn(2+) contacts are provided by His-330, His-334, and His-340. Cys-387, Asn-390, Val-402, Asn-405, Glu-409, Glu-412, and Asp-415 together coordinate Ca(2+). The Disintegrin domain maps to 400-484 (PPVCGNYYVE…GDCPRNPFRA (85 aa)). 7 disulfides stabilise this stretch: Cys-403–Cys-422, Cys-414–Cys-432, Cys-416–Cys-427, Cys-426–Cys-449, Cys-440–Cys-446, Cys-445–Cys-470, and Cys-458–Cys-477. Residues 462–464 (KGD) carry the Cell attachment site motif.

It belongs to the venom metalloproteinase (M12B) family. P-II subfamily. P-IIb sub-subfamily. Requires Zn(2+) as cofactor. Post-translationally, the N-terminus is blocked. In terms of tissue distribution, expressed by the venom gland.

It is found in the secreted. In terms of biological role, snake venom zinc metalloproteinase that inhibits ADP-induced platelet aggregation in human platelet-rich plasma (IC(50) is 175 nM) and cleaves alpha-(FGA) and subsequently the beta-chain (FGG) of bovine fibrinogen, leaving the gamma-chain unaffected. It is also able to inhibit proliferatin of ECV304 cells by inducing apoptosis of these cells. This Trimeresurus stejnegeri (Chinese green tree viper) protein is Zinc metalloproteinase-disintegrin stejnitin.